Here is an 84-residue protein sequence, read N- to C-terminus: Large ribosomal subunit protein bL31B (84 aa).

This sequence belongs to the bacterial ribosomal protein bL31 family. Type B subfamily. Part of the 50S ribosomal subunit.

This is Large ribosomal subunit protein bL31B from Bacteroides thetaiotaomicron (strain ATCC 29148 / DSM 2079 / JCM 5827 / CCUG 10774 / NCTC 10582 / VPI-5482 / E50).